The sequence spans 433 residues: ATP-dependent protease ATPase subunit HslU (433 aa).

Residues isoleucine 18, 60–65 (GVGKTE), aspartate 246, glutamate 311, and arginine 383 contribute to the ATP site.

Belongs to the ClpX chaperone family. HslU subfamily. A double ring-shaped homohexamer of HslV is capped on each side by a ring-shaped HslU homohexamer. The assembly of the HslU/HslV complex is dependent on binding of ATP.

The protein localises to the cytoplasm. Functionally, ATPase subunit of a proteasome-like degradation complex; this subunit has chaperone activity. The binding of ATP and its subsequent hydrolysis by HslU are essential for unfolding of protein substrates subsequently hydrolyzed by HslV. HslU recognizes the N-terminal part of its protein substrates and unfolds these before they are guided to HslV for hydrolysis. This Cereibacter sphaeroides (strain KD131 / KCTC 12085) (Rhodobacter sphaeroides) protein is ATP-dependent protease ATPase subunit HslU.